A 464-amino-acid polypeptide reads, in one-letter code: Argininosuccinate lyase (464 aa).

It belongs to the lyase 1 family. Argininosuccinate lyase subfamily.

It is found in the cytoplasm. It catalyses the reaction 2-(N(omega)-L-arginino)succinate = fumarate + L-arginine. It functions in the pathway amino-acid biosynthesis; L-arginine biosynthesis; L-arginine from L-ornithine and carbamoyl phosphate: step 3/3. This is Argininosuccinate lyase from Pseudomonas entomophila (strain L48).